We begin with the raw amino-acid sequence, 254 residues long: Alcohol dehydrogenase (254 aa).

An NAD(+)-binding site is contributed by 10-33 (FVAGLGGIGLDTSREIVKSGPKNL). Residue Ser-138 participates in substrate binding. Tyr-151 (proton acceptor) is an active-site residue.

It belongs to the short-chain dehydrogenases/reductases (SDR) family. As to quaternary structure, homodimer.

The enzyme catalyses a primary alcohol + NAD(+) = an aldehyde + NADH + H(+). The catalysed reaction is a secondary alcohol + NAD(+) = a ketone + NADH + H(+). This Drosophila mimica (Fruit fly) protein is Alcohol dehydrogenase (Adh).